A 333-amino-acid polypeptide reads, in one-letter code: Ornithine carbamoyltransferase (333 aa).

Residues serine 56 to threonine 59, glutamine 83, arginine 107, and histidine 134 to glutamine 137 each bind carbamoyl phosphate. Residues asparagine 167, aspartate 231, and serine 235–methionine 236 each bind L-ornithine. Carbamoyl phosphate contacts are provided by residues cysteine 273–leucine 274 and arginine 318.

This sequence belongs to the aspartate/ornithine carbamoyltransferase superfamily. OTCase family.

The protein localises to the cytoplasm. The catalysed reaction is carbamoyl phosphate + L-ornithine = L-citrulline + phosphate + H(+). It functions in the pathway amino-acid biosynthesis; L-arginine biosynthesis; L-arginine from L-ornithine and carbamoyl phosphate: step 1/3. Its function is as follows. Reversibly catalyzes the transfer of the carbamoyl group from carbamoyl phosphate (CP) to the N(epsilon) atom of ornithine (ORN) to produce L-citrulline. The chain is Ornithine carbamoyltransferase (argF) from Staphylococcus aureus (strain Mu50 / ATCC 700699).